The primary structure comprises 153 residues: Pheromone-binding protein Gp-9 (153 aa).

An N-terminal signal peptide occupies residues 1 to 19; the sequence is MKTFVLHIFIFALVAFASA. Intrachain disulfides connect cysteine 37–cysteine 77, cysteine 73–cysteine 129, and cysteine 118–cysteine 138.

The protein belongs to the PBP/GOBP family. As to quaternary structure, homodimer.

It localises to the secreted. In terms of biological role, colony queen number, a major feature of social organization, is associated with worker genotype for Gp-9. Colonies are headed by either a single reproductive queen (monogyne form) or multiple queens (polygyne form). Differences in worker Gp-9 genotypes between social forms may cause differences in workers' abilities to recognize queens and regulate their numbers. The polypeptide is Pheromone-binding protein Gp-9 (Solenopsis n. sp. (strain JP-2002) (Fire ant)).